The chain runs to 180 residues: NAD(P)H-quinone oxidoreductase subunit I, chloroplastic (180 aa).

4Fe-4S ferredoxin-type domains lie at glycine 55 to arginine 84 and leucine 95 to glutamate 124. [4Fe-4S] cluster-binding residues include cysteine 64, cysteine 67, cysteine 70, cysteine 74, cysteine 104, cysteine 107, cysteine 110, and cysteine 114.

It belongs to the complex I 23 kDa subunit family. As to quaternary structure, NDH is composed of at least 16 different subunits, 5 of which are encoded in the nucleus. Requires [4Fe-4S] cluster as cofactor.

Its subcellular location is the plastid. The protein localises to the chloroplast thylakoid membrane. It catalyses the reaction a plastoquinone + NADH + (n+1) H(+)(in) = a plastoquinol + NAD(+) + n H(+)(out). It carries out the reaction a plastoquinone + NADPH + (n+1) H(+)(in) = a plastoquinol + NADP(+) + n H(+)(out). Its function is as follows. NDH shuttles electrons from NAD(P)H:plastoquinone, via FMN and iron-sulfur (Fe-S) centers, to quinones in the photosynthetic chain and possibly in a chloroplast respiratory chain. The immediate electron acceptor for the enzyme in this species is believed to be plastoquinone. Couples the redox reaction to proton translocation, and thus conserves the redox energy in a proton gradient. The chain is NAD(P)H-quinone oxidoreductase subunit I, chloroplastic from Hordeum vulgare (Barley).